The following is a 119-amino-acid chain: Protein TusC (119 aa).

It belongs to the DsrF/TusC family. As to quaternary structure, heterohexamer, formed by a dimer of trimers. The hexameric TusBCD complex contains 2 copies each of TusB, TusC and TusD. The TusBCD complex interacts with TusE.

It localises to the cytoplasm. Functionally, part of a sulfur-relay system required for 2-thiolation of 5-methylaminomethyl-2-thiouridine (mnm(5)s(2)U) at tRNA wobble positions. The polypeptide is Protein TusC (Buchnera aphidicola subsp. Baizongia pistaciae (strain Bp)).